Consider the following 750-residue polypeptide: Photosystem I P700 chlorophyll a apoprotein A1 (750 aa).

8 helical membrane passes run 70–93 (VFSA…FHGA), 156–179 (LYCT…FHYH), 195–219 (LNHH…HVSL), 291–309 (IAHH…GHMY), 346–369 (WHAQ…HHMY), 385–411 (LSLF…IFMV), 433–455 (AIIS…LYIH), and 531–549 (FLVH…LILL). [4Fe-4S] cluster is bound by residues Cys573 and Cys582. 2 consecutive transmembrane segments (helical) span residues 589–610 (HVFL…HFSW) and 664–686 (LSAY…MFLF). His675 contacts chlorophyll a'. Residues Met683 and Tyr691 each contribute to the chlorophyll a site. Residue Trp692 coordinates phylloquinone. Residues 724-744 (AVGVTHYLLGGIATTWAFFLA) traverse the membrane as a helical segment.

This sequence belongs to the PsaA/PsaB family. As to quaternary structure, the PsaA/B heterodimer binds the P700 chlorophyll special pair and subsequent electron acceptors. PSI consists of a core antenna complex that captures photons, and an electron transfer chain that converts photonic excitation into a charge separation. The eukaryotic PSI reaction center is composed of at least 11 subunits. Requires P700 is a chlorophyll a/chlorophyll a' dimer, A0 is one or more chlorophyll a, A1 is one or both phylloquinones and FX is a shared 4Fe-4S iron-sulfur center. as cofactor.

It localises to the plastid. Its subcellular location is the chloroplast thylakoid membrane. The enzyme catalyses reduced [plastocyanin] + hnu + oxidized [2Fe-2S]-[ferredoxin] = oxidized [plastocyanin] + reduced [2Fe-2S]-[ferredoxin]. PsaA and PsaB bind P700, the primary electron donor of photosystem I (PSI), as well as the electron acceptors A0, A1 and FX. PSI is a plastocyanin-ferredoxin oxidoreductase, converting photonic excitation into a charge separation, which transfers an electron from the donor P700 chlorophyll pair to the spectroscopically characterized acceptors A0, A1, FX, FA and FB in turn. Oxidized P700 is reduced on the lumenal side of the thylakoid membrane by plastocyanin. The protein is Photosystem I P700 chlorophyll a apoprotein A1 of Oryza nivara (Indian wild rice).